Consider the following 296-residue polypeptide: Ribonuclease H2 subunit A (296 aa).

The RNase H type-2 domain occupies 14-236 (PCLMGIDEAG…CTTHLKGEVE (223 aa)). The a divalent metal cation site is built by Asp20, Glu21, and Asp127.

It belongs to the RNase HII family. Eukaryotic subfamily. The cofactor is Mn(2+). It depends on Mg(2+) as a cofactor.

The catalysed reaction is Endonucleolytic cleavage to 5'-phosphomonoester.. Its function is as follows. Catalytic subunit of RNase HII, an endonuclease that specifically degrades the RNA of RNA:DNA hybrids. Participates in DNA replication, possibly by mediating the removal of lagging-strand Okazaki fragment RNA primers during DNA replication. Mediates the excision of single ribonucleotides from DNA:RNA duplexes. The polypeptide is Ribonuclease H2 subunit A (Arabidopsis thaliana (Mouse-ear cress)).